The following is a 405-amino-acid chain: Secreted aspartic protease 8 (405 aa).

A signal peptide spans 1-25; it reads MVSIITFTKNVLVTLAFALLAQGLA. N50 carries N-linked (GlcNAc...) asparagine glycosylation. Residues 52–78 are disordered; it reads TAHGQHHQSQQQQQQQQQQPAQKRGTV. A compositionally biased stretch (low complexity) spans 58-70; sequence HQSQQQQQQQQQQ. The region spanning 89 to 392 is the Peptidase A1 domain; the sequence is YAATITVGSN…DLDGNTISLA (304 aa). The active site involves D107. Position 107-109 (107-109) interacts with pepstatin A; it reads DTG. C122 and C134 are oxidised to a cystine. D292 is an active-site residue. Residue 292–296 participates in pepstatin A binding; the sequence is DSGTT. C327 and C358 are oxidised to a cystine.

The protein belongs to the peptidase A1 family. In terms of assembly, monomer.

It is found in the secreted. The enzyme catalyses Preferential cleavage at the carboxyl of hydrophobic amino acids, but fails to cleave 15-Leu-|-Tyr-16, 16-Tyr-|-Leu-17 and 24-Phe-|-Phe-25 of insulin B chain. Activates trypsinogen, and degrades keratin.. Its function is as follows. Secreted aspartic peptidases (SAPs) are a group of ten acidic hydrolases considered as key virulence factors. These enzymes supply the fungus with nutrient amino acids as well as are able to degrade the selected host's proteins involved in the immune defense. Moreover, acts toward human hemoglobin though limited proteolysis to generate a variety of antimicrobial hemocidins, enabling to compete with the other microorganisms of the same physiological niche using the microbicidal peptides generated from the host protein. In terms of biological role, plays a key role in defense against host by cleaving histatin-5 (Hst 5), a peptide from human saliva that carries out fungicidal activity. The cleavage rate decreases in an order of SAP2 &gt; SAP9 &gt; SAP3 &gt; SAP7 &gt; SAP4 &gt; SAP1 &gt; SAP8. The hydrolysis of Hst 5 by SAP8 causes production of the DSHAKRHHGY, HHSHRGY and FHEKHHSHRGY peptides. The chain is Secreted aspartic protease 8 from Candida albicans (Yeast).